The following is a 384-amino-acid chain: Cobalt-precorrin-5B C(1)-methyltransferase (384 aa).

It belongs to the CbiD family.

The catalysed reaction is Co-precorrin-5B + S-adenosyl-L-methionine = Co-precorrin-6A + S-adenosyl-L-homocysteine. Its pathway is cofactor biosynthesis; adenosylcobalamin biosynthesis; cob(II)yrinate a,c-diamide from sirohydrochlorin (anaerobic route): step 6/10. Its function is as follows. Catalyzes the methylation of C-1 in cobalt-precorrin-5B to form cobalt-precorrin-6A. This Ruminiclostridium cellulolyticum (strain ATCC 35319 / DSM 5812 / JCM 6584 / H10) (Clostridium cellulolyticum) protein is Cobalt-precorrin-5B C(1)-methyltransferase.